The sequence spans 1781 residues: MISTAPLYSGVHNWTSSDRIRMCGINEERRAPLSDEESTTGGCQHFGSQEFCVSSSFSKVELTAVGSGSNARGTNPDGNTTEKLGHRSEDQSDDPQPKMDYVGNPAEAEGLLVPLSSPGDGLKLPTPDSTEASHSRANCSWTPLSTQMSKQVDCSPAGVKALDSRHGVGEKNTFILATLGTGVPVEGTLPLVTTNFSQLPAPICPPAPGSASGTPSVPDPFQVPLSVPAPVPHSGLVPVQVATSASAPSPPLAPAAPSVPTLISDSNPLSVSASVLVPVPVSAPHSVPVPLSAPAPTPLTVSVSAPPLALIQAPVPPSAPTLVLASVPTPVLAPMPASTPPAAPAPPSVPMPTPTPSSGPPSTPTLIPAFAPTPVPAPTPAPIFTPAPTPMPAATPAAIPTSAPIPASFSLSRVCFPAAQAPAMQKVPLSFQPGTVLTPNQPLVYIPPPSCGQPLSVATLPTTLGVSSTLTLPVLPSYLQDRCLPGVLASPDLRSYPCAFSVARPLASDSKLVSLEVNRLSCTSPSSSTNSQPAPDGVPGPLADTSLTTASAKVLPTSQLLLPAPSGSSVPPHPSKMPGGTDQQTEGTSVTFSPLKSPPQLEREMASPPECSEMPLDLSAKSNRQKLPLPNQRKTPPMPVLTPVHTSSKALLSTVLSRSQRTTQAAGSNVTSCLGSTSSPFVIFPEMVRNGDPSTWVKNSTALISTIPGTYVGVANPVPASLLLNKDPNLGLNRDPRHLPKQEPISIIDQGEPKSTSATCGKKGSQAGAEGQPSTVKSRYTPARIAPGLPGCQTKELSLWKPTGLTNMYPRCSINGKPTSTQVLPVGWSPYHQASLLSIGISSAGQLTPSQGVPIRPTSIVSEFSGVSPLGSSETVHGLPEGQPRPGGPFAPEQDAVTKNKNCRIAAKPYEEQVNPVLLTLSPQSGTLALSVQPSSGDMGVNQGSEESESHLCSDSTPKMEGPQAACGLKLAGDTKPKNQVLATYMSHELVLANPQNLCKMPELPLLPHDSHSKELILDVVPSSERGPSTDLSQLGSQVDLGRVKMEKADGDVVFNLANCFRADGLPAVPQRGQAEARANAGQARVKRESIGVFTCKNSWQPDEETESLPPKKVKCNKEKEIEEEPRQQPPPQPHDKPMVRSSLGSKCRKLPGDPQEPTKKSPRGALDSGKEHNGVRGKHKHRKPTKPESQPPGKRTDGHEEGSLEKKAKNSFRDFIPVVLSTRTRSQSGSICSSFAGMADSDMGSQEVFPTEEEEEVAPTPAKRRKVRKTQRDTQYRSHHAQDKTLLSQGRRHLWRAREMPWRTEAARQMWDTNEEEEDDEEEGLVKRKKRRRQKSRKYQTGEYLIEQEEQRRKGRADSKARKQKTSSQSSEHCLRNRNLLLSSKAQGISDSPNGFLPDNLEEPACLENPEKPSGKRKCKTKHMANASEEARSKGRWSQQKTRSSKSPTPVKPTEPCTPSKYRSAGPEEASESPTARQIPPEARRLIVNKNAGETLLQRAARLGYKDVVLYCLQKHSEDVNHRDNAGYTALHEACSRGWTDILNILLQHGANVNCSSQDGTRPVHDAVVNDNLETIWLLLSYGADPTLATYSGQTAMKLASSDNMKRFLSDHLSDLQGRAEGDPRASWDFYSSSVLEKKDGFACDLLHNPPGSAEQGDDSEQDDFMFELSDKPLLPCYNLQVSVSRGPCNWFLFSDVLKRLKLSSRIFQARFPHLEITTLPKAEFYRQVASSQLLSPAERPGSLEDRSPPGSSETVELVQYEPELLRLLGSEVEYQSWSS.

Disordered stretches follow at residues 64–136 (AVGS…SHSR) and 337–362 (ASTP…GPPS). Polar residues-rich tracts occupy residues 66–82 (GSGS…NTTE) and 127–136 (PDSTEASHSR). Ser-490 carries the post-translational modification Phosphoserine. The segment covering 521 to 531 (SCTSPSSSTNS) has biased composition (low complexity). Disordered regions lie at residues 521–545 (SCTS…LADT), 561–616 (LLPA…EMPL), 733–777 (NRDP…STVK), 869–895 (PLGS…PEQD), and 933–960 (QPSS…TPKM). Polar residues predominate over residues 581-594 (TDQQTEGTSVTFSP). A phosphoserine mark is found at Ser-593 and Ser-607. Lys-741 participates in a covalent cross-link: Glycyl lysine isopeptide (Lys-Gly) (interchain with G-Cter in SUMO2). Residue Ser-1024 is modified to Phosphoserine. Residue Lys-1087 forms a Glycyl lysine isopeptide (Lys-Gly) (interchain with G-Cter in SUMO2) linkage. The interval 1100–1484 (WQPDEETESL…PTARQIPPEA (385 aa)) is disordered. Positions 1116 to 1127 (CNKEKEIEEEPR) are enriched in basic and acidic residues. Position 1162 is a phosphoserine (Ser-1162). The segment covering 1176 to 1185 (VRGKHKHRKP) has biased composition (basic residues). A compositionally biased stretch (basic and acidic residues) spans 1195-1213 (KRTDGHEEGSLEKKAKNSF). A compositionally biased stretch (polar residues) spans 1222-1234 (STRTRSQSGSICS). Composition is skewed to basic and acidic residues over residues 1271–1284 (TQRD…HAQD) and 1297–1307 (RAREMPWRTEA). Residues 1314–1324 (TNEEEEDDEEE) show a composition bias toward acidic residues. Residues 1328–1339 (KRKKRRRQKSRK) show a composition bias toward basic residues. Positions 1350-1362 (EEQRRKGRADSKA) are enriched in basic and acidic residues. Composition is skewed to polar residues over residues 1381-1394 (LLLS…SDSP) and 1437-1449 (RWSQ…SKSP). ANK repeat units follow at residues 1493-1523 (AGET…DVNH), 1527-1556 (AGYT…NVNC), and 1560-1589 (DGTR…DPTL). The segment at 1664-1781 (DDFMFELSDK…SEVEYQSWSS (118 aa)) is PCGF Ub-like fold domain (PUFD); required for the interaction with the KDM2B-SKP1 heterodimeric complex.

It belongs to the BCOR family. Interacts with PCGF1, forming heterodimers. The PCGF1-BCORL1 heterodimeric complex interacts with the KDM2B-SKP1 heterodimeric complex to form a homotetrameric polycomb repression complex 1 (PRC1.1). Interacts with SKP1. Interacts with CTBP1, HDAC4, HDAC5 and HDAC7. As to expression, highly expressed in lung and testis.

The protein localises to the nucleus. Functionally, transcriptional corepressor. May specifically inhibit gene expression when recruited to promoter regions by sequence specific DNA-binding proteins such as BCL6. This repression may be mediated at least in part by histone deacetylase activities which can associate with this corepressor. This Mus musculus (Mouse) protein is BCL-6 corepressor-like protein 1 (Bcorl1).